A 222-amino-acid polypeptide reads, in one-letter code: 4'-phosphopantetheinyl transferase Npt (222 aa).

The Mg(2+) site is built by D105, E107, and E147.

This sequence belongs to the P-Pant transferase superfamily. As to quaternary structure, monomer. It depends on Mg(2+) as a cofactor.

The catalysed reaction is apo-[ACP] + CoA = holo-[ACP] + adenosine 3',5'-bisphosphate + H(+). In terms of biological role, catalyzes the transfer of the 4'-phosphopantetheine moiety from coenzyme A to a serine residue in the acyl-carrier domain of carboxylic acid reductase Car, thus converting apo-Car to fully active holo-Car. Is probably also responsible for the activation of other proteins with phosphopantetheine attachment sites. The chain is 4'-phosphopantetheinyl transferase Npt (npt) from Nocardia iowensis.